Here is a 100-residue protein sequence, read N- to C-terminus: Co-chaperonin GroES (100 aa).

The protein belongs to the GroES chaperonin family. As to quaternary structure, heptamer of 7 subunits arranged in a ring. Interacts with the chaperonin GroEL.

The protein localises to the cytoplasm. Its function is as follows. Together with the chaperonin GroEL, plays an essential role in assisting protein folding. The GroEL-GroES system forms a nano-cage that allows encapsulation of the non-native substrate proteins and provides a physical environment optimized to promote and accelerate protein folding. GroES binds to the apical surface of the GroEL ring, thereby capping the opening of the GroEL channel. This Mycolicibacterium vanbaalenii (strain DSM 7251 / JCM 13017 / BCRC 16820 / KCTC 9966 / NRRL B-24157 / PYR-1) (Mycobacterium vanbaalenii) protein is Co-chaperonin GroES.